The sequence spans 448 residues: Homogentisate 1,2-dioxygenase (448 aa).

The disordered stretch occupies residues 1–26 (MNMLAPAAKNAFTPASPDRPAYQSGF). H302 (proton acceptor) is an active-site residue. Residues H345 and E351 each contribute to the Fe cation site. Homogentisate is bound by residues Y360 and H381. Position 381 (H381) interacts with Fe cation.

The protein belongs to the homogentisate dioxygenase family. In terms of assembly, hexamer; dimer of trimers. Requires Fe cation as cofactor.

It carries out the reaction homogentisate + O2 = 4-maleylacetoacetate + H(+). The protein operates within amino-acid degradation; L-phenylalanine degradation; acetoacetate and fumarate from L-phenylalanine: step 4/6. Functionally, involved in the catabolism of homogentisate (2,5-dihydroxyphenylacetate or 2,5-OH-PhAc), a central intermediate in the degradation of phenylalanine and tyrosine. Catalyzes the oxidative ring cleavage of the aromatic ring of homogentisate to yield maleylacetoacetate. This Ralstonia nicotianae (strain ATCC BAA-1114 / GMI1000) (Ralstonia solanacearum) protein is Homogentisate 1,2-dioxygenase.